The primary structure comprises 454 residues: Probable glycine dehydrogenase (decarboxylating) subunit 1 (454 aa).

Belongs to the GcvP family. N-terminal subunit subfamily. As to quaternary structure, the glycine cleavage system is composed of four proteins: P, T, L and H. In this organism, the P 'protein' is a heterodimer of two subunits.

It carries out the reaction N(6)-[(R)-lipoyl]-L-lysyl-[glycine-cleavage complex H protein] + glycine + H(+) = N(6)-[(R)-S(8)-aminomethyldihydrolipoyl]-L-lysyl-[glycine-cleavage complex H protein] + CO2. Functionally, the glycine cleavage system catalyzes the degradation of glycine. The P protein binds the alpha-amino group of glycine through its pyridoxal phosphate cofactor; CO(2) is released and the remaining methylamine moiety is then transferred to the lipoamide cofactor of the H protein. This is Probable glycine dehydrogenase (decarboxylating) subunit 1 from Sorangium cellulosum (strain So ce56) (Polyangium cellulosum (strain So ce56)).